Here is a 795-residue protein sequence, read N- to C-terminus: Nucleolar complex protein 3 homolog (795 aa).

Disordered stretches follow at residues 1-88, 124-144, and 168-190; these read MKPM…PLDM, RDDVINKYEKMPRKSKSEPEK, and IPSEEQEENEEEMDTEHTEEVPE. 2 stretches are compositionally biased toward basic and acidic residues: residues 22 to 39 and 46 to 58; these read LKLDNKLKNKQFKQESSA and QKQLREAVRDVRS. The segment covering 74-88 has biased composition (acidic residues); sequence EEEYEVEEESLPLDM. The segment covering 171–181 has biased composition (acidic residues); that stretch reads EEQEENEEEMD. Residues 447 to 492 adopt a coiled-coil conformation; the sequence is SYKDKKKNLSRMQRKWKKAEEKLERELLEAEASESKEKKLKLNTET.

It belongs to the CBF/MAK21 family.

The protein resides in the nucleus. It is found in the nucleolus. The sequence is that of Nucleolar complex protein 3 homolog (noc3l) from Xenopus laevis (African clawed frog).